A 157-amino-acid chain; its full sequence is Transcriptional repressor NrdR (157 aa).

The segment at 3–34 is a zinc-finger region; that stretch reads CPFCSATDTKVIDSRLVADGHQVRRRRECLLC. The 91-residue stretch at 49-139 folds into the ATP-cone domain; sequence PRVVKQDGSR…VYRAFEDVSE (91 aa).

Belongs to the NrdR family. The cofactor is Zn(2+).

Functionally, negatively regulates transcription of bacterial ribonucleotide reductase nrd genes and operons by binding to NrdR-boxes. The polypeptide is Transcriptional repressor NrdR (Shewanella loihica (strain ATCC BAA-1088 / PV-4)).